A 194-amino-acid polypeptide reads, in one-letter code: uncharacterized protein (194 aa).

Residues 77–92 show a composition bias toward polar residues; that stretch reads QTQPQHQTLSQHLPQT. A disordered region spans residues 77 to 96; that stretch reads QTQPQHQTLSQHLPQTHHTD. The helical transmembrane segment at 169-189 threads the bilayer; the sequence is FWEILLLIILIAVLVYGIYWL.

Its subcellular location is the host membrane. The protein resides in the virion. This is an uncharacterized protein from Acanthamoeba polyphaga (Amoeba).